Here is a 265-residue protein sequence, read N- to C-terminus: Thiazole synthase (265 aa).

Lys-107 acts as the Schiff-base intermediate with DXP in catalysis. 1-deoxy-D-xylulose 5-phosphate is bound by residues Gly-168, 194-195, and 216-217; these read AG and NT.

It belongs to the ThiG family. As to quaternary structure, homotetramer. Forms heterodimers with either ThiH or ThiS.

The protein resides in the cytoplasm. It carries out the reaction [ThiS sulfur-carrier protein]-C-terminal-Gly-aminoethanethioate + 2-iminoacetate + 1-deoxy-D-xylulose 5-phosphate = [ThiS sulfur-carrier protein]-C-terminal Gly-Gly + 2-[(2R,5Z)-2-carboxy-4-methylthiazol-5(2H)-ylidene]ethyl phosphate + 2 H2O + H(+). It participates in cofactor biosynthesis; thiamine diphosphate biosynthesis. Functionally, catalyzes the rearrangement of 1-deoxy-D-xylulose 5-phosphate (DXP) to produce the thiazole phosphate moiety of thiamine. Sulfur is provided by the thiocarboxylate moiety of the carrier protein ThiS. In vitro, sulfur can be provided by H(2)S. This is Thiazole synthase from Pseudomonas aeruginosa (strain LESB58).